A 286-amino-acid chain; its full sequence is Phosphatidylserine decarboxylase proenzyme (286 aa).

Catalysis depends on charge relay system; for autoendoproteolytic cleavage activity residues aspartate 90, histidine 147, and serine 253. The Schiff-base intermediate with substrate; via pyruvic acid; for decarboxylase activity role is filled by serine 253. Residue serine 253 is modified to Pyruvic acid (Ser); by autocatalysis.

This sequence belongs to the phosphatidylserine decarboxylase family. PSD-B subfamily. Prokaryotic type I sub-subfamily. In terms of assembly, heterodimer of a large membrane-associated beta subunit and a small pyruvoyl-containing alpha subunit. Requires pyruvate as cofactor. Is synthesized initially as an inactive proenzyme. Formation of the active enzyme involves a self-maturation process in which the active site pyruvoyl group is generated from an internal serine residue via an autocatalytic post-translational modification. Two non-identical subunits are generated from the proenzyme in this reaction, and the pyruvate is formed at the N-terminus of the alpha chain, which is derived from the carboxyl end of the proenzyme. The autoendoproteolytic cleavage occurs by a canonical serine protease mechanism, in which the side chain hydroxyl group of the serine supplies its oxygen atom to form the C-terminus of the beta chain, while the remainder of the serine residue undergoes an oxidative deamination to produce ammonia and the pyruvoyl prosthetic group on the alpha chain. During this reaction, the Ser that is part of the protease active site of the proenzyme becomes the pyruvoyl prosthetic group, which constitutes an essential element of the active site of the mature decarboxylase.

The protein localises to the cell membrane. It catalyses the reaction a 1,2-diacyl-sn-glycero-3-phospho-L-serine + H(+) = a 1,2-diacyl-sn-glycero-3-phosphoethanolamine + CO2. Its pathway is phospholipid metabolism; phosphatidylethanolamine biosynthesis; phosphatidylethanolamine from CDP-diacylglycerol: step 2/2. Functionally, catalyzes the formation of phosphatidylethanolamine (PtdEtn) from phosphatidylserine (PtdSer). The protein is Phosphatidylserine decarboxylase proenzyme of Pseudoalteromonas atlantica (strain T6c / ATCC BAA-1087).